Consider the following 279-residue polypeptide: Oxygen-dependent coproporphyrinogen-III oxidase (279 aa).

Ser-102 contacts substrate. A divalent metal cation is bound by residues His-106 and His-116. His-116 acts as the Proton donor in catalysis. 118-120 is a substrate binding site; sequence NTR. A divalent metal cation contacts are provided by His-149 and His-179. The interval 244 to 279 is important for dimerization; sequence YVEFNLLYDRGTKFGLMTDGNVEAILMSLPPEVKFN.

Belongs to the aerobic coproporphyrinogen-III oxidase family. As to quaternary structure, homodimer. It depends on a divalent metal cation as a cofactor.

Its subcellular location is the cytoplasm. The catalysed reaction is coproporphyrinogen III + O2 + 2 H(+) = protoporphyrinogen IX + 2 CO2 + 2 H2O. Its pathway is porphyrin-containing compound metabolism; protoporphyrin-IX biosynthesis; protoporphyrinogen-IX from coproporphyrinogen-III (O2 route): step 1/1. Functionally, involved in the heme biosynthesis. Catalyzes the aerobic oxidative decarboxylation of propionate groups of rings A and B of coproporphyrinogen-III to yield the vinyl groups in protoporphyrinogen-IX. In Rickettsia rickettsii (strain Iowa), this protein is Oxygen-dependent coproporphyrinogen-III oxidase.